The chain runs to 352 residues: UDP-3-O-acylglucosamine N-acyltransferase (352 aa).

The active-site Proton acceptor is histidine 244.

The protein belongs to the transferase hexapeptide repeat family. LpxD subfamily. In terms of assembly, homotrimer.

It catalyses the reaction a UDP-3-O-[(3R)-3-hydroxyacyl]-alpha-D-glucosamine + a (3R)-hydroxyacyl-[ACP] = a UDP-2-N,3-O-bis[(3R)-3-hydroxyacyl]-alpha-D-glucosamine + holo-[ACP] + H(+). The protein operates within bacterial outer membrane biogenesis; LPS lipid A biosynthesis. In terms of biological role, catalyzes the N-acylation of UDP-3-O-acylglucosamine using 3-hydroxyacyl-ACP as the acyl donor. Is involved in the biosynthesis of lipid A, a phosphorylated glycolipid that anchors the lipopolysaccharide to the outer membrane of the cell. The polypeptide is UDP-3-O-acylglucosamine N-acyltransferase (Leptospira biflexa serovar Patoc (strain Patoc 1 / Ames)).